Here is a 631-residue protein sequence, read N- to C-terminus: ATP-dependent RNA helicase mrh4, mitochondrial (631 aa).

A mitochondrion-targeting transit peptide spans 1–39 (MYPLGRVSLPVRSPVCLFCQNRTSSLLPSAYVWQSARTM). The interval 55–111 (PNVAKTSLKKKRNDTDRFGPFAGMNQTEARIRDDPRSRSPASLKRSKAPSDESGRKD) is disordered. A compositionally biased stretch (basic and acidic residues) spans 102-111 (APSDESGRKD). Residues 143-176 (TSFDQFPLLPVVRHSIFSQALPGLHDVTPTPIQR) carry the Q motif motif. The tract at residues 181-200 (RLLDDTNKDKKPKKRAEGEP) is disordered. Residues 196 to 408 (AEGEPEYDQY…RKKYPDIQRL (213 aa)) enclose the Helicase ATP-binding domain. 209–216 (AETGSGKT) provides a ligand contact to ATP. The DEAD box signature appears at 355–358 (DEAD). One can recognise a Helicase C-terminal domain in the interval 442–631 (DVIWSIGKAG…EGMFRGQALI (190 aa)).

Belongs to the DEAD box helicase family. MRH4 subfamily.

It is found in the mitochondrion. It carries out the reaction ATP + H2O = ADP + phosphate + H(+). In terms of biological role, ATP-binding RNA helicase involved in mitochondrial RNA metabolism. Required for maintenance of mitochondrial DNA. The sequence is that of ATP-dependent RNA helicase mrh4, mitochondrial (mrh4) from Aspergillus terreus (strain NIH 2624 / FGSC A1156).